The primary structure comprises 448 residues: MILTSNVKLMPGSKVEAVIQISKEFVKAKYNEILKDYSSRLKVKGFRTGRVPFSIIEGKYSDNIRALAIENLIHKSLEEFFESAIYKPLSYAVPKILDEKLEINFDKDFEFTFVYESYPEFEISDISNFKVEIPEVVISDSDIEDELKLLQFENSIIVEDNGSVKVGSIVRVDFVELDDSLNEILATKRQDFVLTVGESDDYYGFGYDIIGMKKDEEKIVEKNYGSDYKFSELANTSKRLKIGVKDIKRRDIPELDDAFAKDVKDSLNTLEDLRDYVRENMLRVVQEKTNSLKLSKLLSGIAEKVNIDVPSSMFEAELKNVINEFSHQNKINITQLQNSSTGLEGVNDVFKENVLNKLKSKLVFQKMVDNDSSEVTELDLENELIKQAQNLKMAPQDVKKFYKERNLFGLLKDEIKRQKVKEKILQDLEEIKLEKVSFRDFVNYKTGE.

The PPIase FKBP-type domain maps to 167-253; it reads GSIVRVDFVE…VKDIKRRDIP (87 aa).

This sequence belongs to the FKBP-type PPIase family. Tig subfamily.

It localises to the cytoplasm. It catalyses the reaction [protein]-peptidylproline (omega=180) = [protein]-peptidylproline (omega=0). Functionally, involved in protein export. Acts as a chaperone by maintaining the newly synthesized protein in an open conformation. Functions as a peptidyl-prolyl cis-trans isomerase. This chain is Trigger factor, found in Borrelia recurrentis (strain A1).